Here is a 391-residue protein sequence, read N- to C-terminus: Elongation factor Tu (391 aa).

The region spanning 10–201 (KPHVNIGTIG…AVDDYIPTPA (192 aa)) is the tr-type G domain. Residues 19–26 (GHVDHGKT) are G1. Residue 19–26 (GHVDHGKT) participates in GTP binding. Thr26 provides a ligand contact to Mg(2+). The interval 55–59 (GITIS) is G2. The interval 76–79 (DCPG) is G3. GTP is bound by residues 76–80 (DCPGH) and 131–134 (NKVD). Residues 131-134 (NKVD) are G4. The segment at 169–171 (SAL) is G5.

Belongs to the TRAFAC class translation factor GTPase superfamily. Classic translation factor GTPase family. EF-Tu/EF-1A subfamily. As to quaternary structure, monomer.

The protein localises to the cytoplasm. It catalyses the reaction GTP + H2O = GDP + phosphate + H(+). Functionally, GTP hydrolase that promotes the GTP-dependent binding of aminoacyl-tRNA to the A-site of ribosomes during protein biosynthesis. This chain is Elongation factor Tu, found in Dinoroseobacter shibae (strain DSM 16493 / NCIMB 14021 / DFL 12).